The sequence spans 459 residues: Transcription factor AP-2-beta (459 aa).

Lysine 21 is covalently cross-linked (Glycyl lysine isopeptide (Lys-Gly) (interchain with G-Cter in SUMO)). The tract at residues 30–139 (HDGVPSHSSR…PQLSGLDPRR (110 aa)) is disordered. Residues 35 to 51 (SHSSRLSQLGSVSQGPY) show a composition bias toward polar residues. The segment covering 121 to 132 (LLPQPRAALPQL) has biased composition (low complexity). Serine 258 is modified (phosphoserine; by PKA). The H-S-H (helix-span-helix), dimerization stretch occupies residues 299-429 (RRKAANVTLL…YLTEALKGMD (131 aa)). The segment at 435–459 (NTTNRHTSGEGPGSKTGDKEEKHRK) is disordered. Over residues 450-459 (TGDKEEKHRK) the composition is skewed to basic and acidic residues.

Belongs to the AP-2 family. In terms of assembly, binds DNA as a dimer. Can form homodimers or heterodimers with other AP-2 family members. Interacts with CITED4. Interacts with UBE2I. Interacts with KCTD1; this interaction represses transcription activation. Interacts with CITED2 (via C-terminus); the interaction stimulates TFAP2B-transcriptional activity. Sumoylated. Sumoylated on Lys-21; which inhibits transcriptional activity. As to expression, localizes to neurons in areas of the cerebral cortex, cerebellum and hypothalamus (at protein level).

It is found in the nucleus. Sequence-specific DNA-binding protein that interacts with inducible viral and cellular enhancer elements to regulate transcription of selected genes. AP-2 factors bind to the consensus sequence 5'-GCCNNNGGC-3' and activate genes involved in a large spectrum of important biological functions including proper eye, face, body wall, limb and neural tube development. They also suppress a number of genes including MCAM/MUC18, C/EBP alpha and MYC. AP-2-beta appears to be required for normal face and limb development and for proper terminal differentiation and function of renal tubular epithelia. The polypeptide is Transcription factor AP-2-beta (Tfap2b) (Mus musculus (Mouse)).